The sequence spans 103 residues: Phosphoribosyl-ATP pyrophosphatase (103 aa).

It belongs to the PRA-PH family.

The protein resides in the cytoplasm. The catalysed reaction is 1-(5-phospho-beta-D-ribosyl)-ATP + H2O = 1-(5-phospho-beta-D-ribosyl)-5'-AMP + diphosphate + H(+). It participates in amino-acid biosynthesis; L-histidine biosynthesis; L-histidine from 5-phospho-alpha-D-ribose 1-diphosphate: step 2/9. The polypeptide is Phosphoribosyl-ATP pyrophosphatase (hisE) (Rhodobacter capsulatus (strain ATCC BAA-309 / NBRC 16581 / SB1003)).